The primary structure comprises 640 residues: RNA polymerase II elongation factor ELL2 (640 aa).

Disordered stretches follow at residues Ala172–Ser202, Lys290–Arg320, and Arg343–Leu490. Composition is skewed to polar residues over residues Thr184 to Ser202 and Leu291 to Gln318. The span at Ala360–Ile372 shows a compositional bias: low complexity. The segment covering Ile391–Thr401 has biased composition (polar residues). Positions Met457–Lys470 are enriched in basic residues. Over residues Glu471–Leu490 the composition is skewed to basic and acidic residues. 2 positions are modified to phosphoserine: Ser503 and Ser580. The OCEL domain maps to Pro526–Ala636.

This sequence belongs to the ELL/occludin family. In terms of assembly, component of the super elongation complex (SEC), at least composed of EAF1, EAF2, CDK9, MLLT3/AF9, AFF (AFF1 or AFF4), the P-TEFb complex and ELL (ELL, ELL2 or ELL3). Component of the little elongation complex (LEC), at least composed of ELL (ELL, ELL2 or ELL3), ZC3H8, ICE1 and ICE2. Interacts with AFF4; the interaction is direct and leads to stabilize ELL2 and prevent ELL2 ubiquitination. Interacts with EAF1 and EAF2. Post-translationally, ubiquitinated by SIAH1, leading to its degradation by the proteasome. Interaction with AFF4 stabilizes ELL2 and prevents ELL2 ubiquitination.

The protein resides in the nucleus. In terms of biological role, elongation factor component of the super elongation complex (SEC), a complex required to increase the catalytic rate of RNA polymerase II transcription by suppressing transient pausing by the polymerase at multiple sites along the DNA. Component of the little elongation complex (LEC), a complex required to regulate small nuclear RNA (snRNA) gene transcription by RNA polymerase II and III. Plays a role in immunoglobulin secretion in plasma cells: directs efficient alternative mRNA processing, influencing both proximal poly(A) site choice and exon skipping, as well as immunoglobulin heavy chain (IgH) alternative processing. Probably acts by regulating histone modifications accompanying transition from membrane-specific to secretory IgH mRNA expression. The chain is RNA polymerase II elongation factor ELL2 (ELL2) from Homo sapiens (Human).